A 730-amino-acid chain; its full sequence is LisH domain-containing protein ARMC9 (730 aa).

The region spanning 7–39 (HESELLGLVKEYLDFAEFEDTLKTFSKECKVKG) is the LisH domain. The stretch at 205–242 (SNNKEMLQQLHQQLLEAERRAMAYLKRYNKMQADYHSL) forms a coiled coil. Phosphoserine is present on serine 583. The segment at 675–730 (QNAQQARNGCPRPIPVAQPDDYKEGKRGVAGRATPSSCKSAECAEPVLSSGAQKPK) is disordered.

In terms of assembly, interacts with TOGARAM1, CCDC66, CEP104, CSPP1 and CEP290. Interacts with NDUFAF2.

The protein resides in the cytoplasm. The protein localises to the cytoskeleton. It localises to the cilium basal body. It is found in the cell projection. Its subcellular location is the cilium. The protein resides in the microtubule organizing center. The protein localises to the centrosome. It localises to the centriole. Functionally, involved in ciliogenesis. It is required for appropriate acetylation and polyglutamylation of ciliary microtubules, and regulation of cilium length. Acts as a positive regulator of hedgehog (Hh)signaling. May participate in the trafficking and/or retention of GLI2 and GLI3 proteins at the ciliary tip. The polypeptide is LisH domain-containing protein ARMC9 (Armc9) (Rattus norvegicus (Rat)).